Reading from the N-terminus, the 448-residue chain is Probable glycine dehydrogenase (decarboxylating) subunit 1 (448 aa).

The protein belongs to the GcvP family. N-terminal subunit subfamily. In terms of assembly, the glycine cleavage system is composed of four proteins: P, T, L and H. In this organism, the P 'protein' is a heterodimer of two subunits.

The enzyme catalyses N(6)-[(R)-lipoyl]-L-lysyl-[glycine-cleavage complex H protein] + glycine + H(+) = N(6)-[(R)-S(8)-aminomethyldihydrolipoyl]-L-lysyl-[glycine-cleavage complex H protein] + CO2. The glycine cleavage system catalyzes the degradation of glycine. The P protein binds the alpha-amino group of glycine through its pyridoxal phosphate cofactor; CO(2) is released and the remaining methylamine moiety is then transferred to the lipoamide cofactor of the H protein. This Shouchella clausii (strain KSM-K16) (Alkalihalobacillus clausii) protein is Probable glycine dehydrogenase (decarboxylating) subunit 1.